The following is a 312-amino-acid chain: DNA-directed RNA polymerase subunit alpha (312 aa).

The alpha N-terminal domain (alpha-NTD) stretch occupies residues 1-229 (MLQYQIDRIE…ELFQPLATVT (229 aa)). Residues 239–312 (EPSAEAQIPL…ISIPQSRTSA (74 aa)) are alpha C-terminal domain (alpha-CTD).

This sequence belongs to the RNA polymerase alpha chain family. As to quaternary structure, in cyanobacteria the RNAP catalytic core is composed of 2 alpha, 1 beta, 1 beta', 1 gamma and 1 omega subunit. When a sigma factor is associated with the core the holoenzyme is formed, which can initiate transcription.

The catalysed reaction is RNA(n) + a ribonucleoside 5'-triphosphate = RNA(n+1) + diphosphate. DNA-dependent RNA polymerase catalyzes the transcription of DNA into RNA using the four ribonucleoside triphosphates as substrates. The protein is DNA-directed RNA polymerase subunit alpha of Synechococcus sp. (strain CC9605).